The sequence spans 369 residues: MWQEYYFLNVFFPLLKVCCLTINSHVVILLPWECYHLIWKILPYIGTTVGSMEEYNTSSTDFTFMGLFNRKETSGLIFAIISIIFFTALMANGVMIFLIQTDLRLHTPMYFLLSHLSLIDMMYISTIVPKMLVNYLLDQRTISFVGCTAQHFLYLTLVGAEFFLLGLMAYDRYVAICNPLRYPVLMSRRVCWMIIAGSWFGGSLDGFLLTPITMSFPFCNSREINHFFCEAPAVLKLACADTALYETVMYVCCVLMLLIPFSVVLASYARILTTVQCMSSVEGRKKAFATCSSHMTVVSLFYGAAMYTYMLPHSYHKPAQDKVLSVFYTILTPMLNPLIYSLRNKDVTGALKRALGRFKGPQRVSGGVF.

Over 1-76 the chain is Extracellular; it reads MWQEYYFLNV…LFNRKETSGL (76 aa). A glycan (N-linked (GlcNAc...) asparagine) is linked at N56. The helical transmembrane segment at 77–97 threads the bilayer; it reads IFAIISIIFFTALMANGVMIF. Residues 98–107 lie on the Cytoplasmic side of the membrane; that stretch reads LIQTDLRLHT. Residues 108–128 traverse the membrane as a helical segment; the sequence is PMYFLLSHLSLIDMMYISTIV. Topologically, residues 129–148 are extracellular; it reads PKMLVNYLLDQRTISFVGCT. A disulfide bridge connects residues C147 and C239. The chain crosses the membrane as a helical span at residues 149-169; the sequence is AQHFLYLTLVGAEFFLLGLMA. At 170–191 the chain is on the cytoplasmic side; that stretch reads YDRYVAICNPLRYPVLMSRRVC. A helical transmembrane segment spans residues 192 to 212; that stretch reads WMIIAGSWFGGSLDGFLLTPI. Over 213-247 the chain is Extracellular; the sequence is TMSFPFCNSREINHFFCEAPAVLKLACADTALYET. Residues 248-268 form a helical membrane-spanning segment; the sequence is VMYVCCVLMLLIPFSVVLASY. Residues 269–286 lie on the Cytoplasmic side of the membrane; it reads ARILTTVQCMSSVEGRKK. Residues 287–307 form a helical membrane-spanning segment; that stretch reads AFATCSSHMTVVSLFYGAAMY. The Extracellular portion of the chain corresponds to 308–321; sequence TYMLPHSYHKPAQD. A helical membrane pass occupies residues 322 to 342; it reads KVLSVFYTILTPMLNPLIYSL. The Cytoplasmic portion of the chain corresponds to 343-369; it reads RNKDVTGALKRALGRFKGPQRVSGGVF.

It belongs to the G-protein coupled receptor 1 family.

It is found in the cell membrane. In terms of biological role, odorant receptor. The chain is Olfactory receptor 2T1 (OR2T1) from Homo sapiens (Human).